The following is a 206-amino-acid chain: Small ribosomal subunit protein uS5 (206 aa).

Residues 1–42 (MENKTEVVVAENANNQTQPERKKFDRKPNRRPQGPKQFQKDD) form a disordered region. One can recognise an S5 DRBM domain in the interval 43–106 (FEEKVVTIRR…KEAKKNLIRV (64 aa)).

This sequence belongs to the universal ribosomal protein uS5 family. As to quaternary structure, part of the 30S ribosomal subunit. Contacts proteins S4 and S8.

In terms of biological role, with S4 and S12 plays an important role in translational accuracy. Functionally, located at the back of the 30S subunit body where it stabilizes the conformation of the head with respect to the body. In Mesoplasma florum (strain ATCC 33453 / NBRC 100688 / NCTC 11704 / L1) (Acholeplasma florum), this protein is Small ribosomal subunit protein uS5.